The chain runs to 458 residues: Glycine--tRNA ligase (458 aa).

Arg97 and Glu171 together coordinate substrate. Residues 203–205, 213–218, 287–288, and 331–334 each bind ATP; these read RNE, FRTREF, EL, and GADR. A substrate-binding site is contributed by 218–222; it reads FEQME. 327-331 contributes to the substrate binding site; that stretch reads EPSLG.

Belongs to the class-II aminoacyl-tRNA synthetase family. As to quaternary structure, homodimer.

The protein resides in the cytoplasm. The catalysed reaction is tRNA(Gly) + glycine + ATP = glycyl-tRNA(Gly) + AMP + diphosphate. Functionally, catalyzes the attachment of glycine to tRNA(Gly). The chain is Glycine--tRNA ligase from Bacillus anthracis.